Consider the following 192-residue polypeptide: Protein GrpE (192 aa).

The tract at residues 1–34 (MSSKEQKTPNEQVSEEMENTAEQQVEATQETGEC) is disordered. Positions 20-31 (TAEQQVEATQET) are enriched in polar residues.

It belongs to the GrpE family. As to quaternary structure, homodimer.

It is found in the cytoplasm. In terms of biological role, participates actively in the response to hyperosmotic and heat shock by preventing the aggregation of stress-denatured proteins, in association with DnaK and GrpE. It is the nucleotide exchange factor for DnaK and may function as a thermosensor. Unfolded proteins bind initially to DnaJ; upon interaction with the DnaJ-bound protein, DnaK hydrolyzes its bound ATP, resulting in the formation of a stable complex. GrpE releases ADP from DnaK; ATP binding to DnaK triggers the release of the substrate protein, thus completing the reaction cycle. Several rounds of ATP-dependent interactions between DnaJ, DnaK and GrpE are required for fully efficient folding. The protein is Protein GrpE of Yersinia pestis.